A 1380-amino-acid chain; its full sequence is Inverted formin-2 (1380 aa).

Residues 1–330 form the GBD/FH3 domain; it reads MSLKEGAHTK…RAVLLADDCQ (330 aa). Disordered stretches follow at residues 341–391 and 440–541; these read LVTS…SGIP and ISTS…PPPL. Residues 343 to 352 show a composition bias toward basic residues; that stretch reads TSKKHPSKEK. The span at 367–385 shows a compositional bias: basic and acidic residues; sequence QTDKPKDESCEEKTVKKDP. The region spanning 432 to 592 is the FH1 domain; sequence VVSNAIDRIS…DYSLGYLPKA (161 aa). Pro residues-rich tracts occupy residues 446–470 and 478–541; these read LPPP…PPLP and TPPP…PPPL. The region spanning 593–981 is the FH2 domain; sequence YFKVNKPTLK…AEKRKKQLAD (389 aa). Coiled-coil stretches lie at residues 879-930 and 956-991; these read LKKL…KLAD and LKAK…KGEN. The WH2 domain maps to 1009–1024; the sequence is DALLADIKKGFQLRKT. Disordered stretches follow at residues 1026–1049, 1188–1244, and 1260–1380; these read KTKT…DGTD, HKER…LSEA, and FQSS…CVVQ. Polar residues-rich tracts occupy residues 1206 to 1244, 1260 to 1284, and 1294 to 1303; these read GTES…LSEA, FQSS…QAQR, and TRDTTVTEGS. Residues 1306–1322 show a composition bias toward basic and acidic residues; the sequence is EEDKCNDEGYPEHKTMG. Residues 1328–1339 are compositionally biased toward low complexity; it reads SSSHSTTLQQSS. Basic residues predominate over residues 1345–1359; that stretch reads VKRGSSKHKKKRRSS.

It belongs to the formin homology family.

The polypeptide is Inverted formin-2 (inf2) (Xenopus tropicalis (Western clawed frog)).